We begin with the raw amino-acid sequence, 273 residues long: Vitamin B12-binding protein (273 aa).

A signal peptide spans 1–18 (MMKTLSSLLLLFSVSLQA). The Fe/B12 periplasmic-binding domain maps to 23–273 (RVISLAPHAT…EHFASIEQKR (251 aa)). C183 and C263 form a disulfide bridge.

The protein belongs to the BtuF family. As to quaternary structure, the complex is composed of two ATP-binding proteins (BtuD), two transmembrane proteins (BtuC) and a solute-binding protein (BtuF).

The protein localises to the periplasm. Its function is as follows. Part of the ABC transporter complex BtuCDF involved in vitamin B12 import. Binds vitamin B12 and delivers it to the periplasmic surface of BtuC. This Vibrio vulnificus (strain CMCP6) protein is Vitamin B12-binding protein.